Reading from the N-terminus, the 97-residue chain is Putative defensin-like protein 240 (97 aa).

Residues 1–23 (MRYTTSFIVFCFYIFLFTNLVQG) form the signal peptide. Disulfide bonds link cysteine 29/cysteine 88, cysteine 39/cysteine 69, cysteine 47/cysteine 85, and cysteine 67/cysteine 87.

The protein belongs to the DEFL family.

The protein localises to the secreted. In Arabidopsis thaliana (Mouse-ear cress), this protein is Putative defensin-like protein 240 (SCRL18).